The following is a 426-amino-acid chain: Putative competence-damage inducible protein (426 aa).

Belongs to the CinA family.

The protein is Putative competence-damage inducible protein of Symbiobacterium thermophilum (strain DSM 24528 / JCM 14929 / IAM 14863 / T).